Reading from the N-terminus, the 597-residue chain is Elongation factor 4 (597 aa).

One can recognise a tr-type G domain in the interval 2–184; it reads DHIRNFSIIA…SLIAKVPPPK (183 aa). GTP-binding positions include 14–19 and 131–134; these read DHGKST and NKID.

The protein belongs to the TRAFAC class translation factor GTPase superfamily. Classic translation factor GTPase family. LepA subfamily.

It localises to the cell inner membrane. The enzyme catalyses GTP + H2O = GDP + phosphate + H(+). Required for accurate and efficient protein synthesis under certain stress conditions. May act as a fidelity factor of the translation reaction, by catalyzing a one-codon backward translocation of tRNAs on improperly translocated ribosomes. Back-translocation proceeds from a post-translocation (POST) complex to a pre-translocation (PRE) complex, thus giving elongation factor G a second chance to translocate the tRNAs correctly. Binds to ribosomes in a GTP-dependent manner. This chain is Elongation factor 4, found in Burkholderia lata (strain ATCC 17760 / DSM 23089 / LMG 22485 / NCIMB 9086 / R18194 / 383).